A 615-amino-acid chain; its full sequence is Lipoprotein LpqB (615 aa).

An N-terminal signal peptide occupies residues 1–29 (MGADRGRGGRRRPARVVAYAVGGVVLLAG). Cysteine 30 is lipidated: N-palmitoyl cysteine. A lipid anchor (S-diacylglycerol cysteine) is attached at cysteine 30. Residues 100 to 123 (PDESATVLAGGPGTESDHSGNRED) are disordered. Residues 114 to 123 (ESDHSGNRED) are compositionally biased toward basic and acidic residues.

This sequence belongs to the LpqB lipoprotein family.

The protein resides in the cell membrane. This Streptomyces coelicolor (strain ATCC BAA-471 / A3(2) / M145) protein is Lipoprotein LpqB.